Consider the following 146-residue polypeptide: Prepilin peptidase-dependent protein D (146 aa).

A propeptide spans 1–6 (leader sequence); that stretch reads MDKQRG. F7 is subject to N-methylphenylalanine. The helical transmembrane segment at 7–27 threads the bilayer; sequence FTLIELMVVIGIIAILSAIGI.

The protein belongs to the N-Me-Phe pilin family.

It localises to the fimbrium. The protein resides in the membrane. Functionally, major component of the type IV pilus (T4P) that plays a role in cell adhesion and motility. Not produced when grown under standard laboratory conditions. This Escherichia coli (strain K12) protein is Prepilin peptidase-dependent protein D (ppdD).